The primary structure comprises 115 residues: Large ribosomal subunit protein bL19 (115 aa).

It belongs to the bacterial ribosomal protein bL19 family.

This protein is located at the 30S-50S ribosomal subunit interface and may play a role in the structure and function of the aminoacyl-tRNA binding site. This chain is Large ribosomal subunit protein bL19, found in Wigglesworthia glossinidia brevipalpis.